The sequence spans 495 residues: Putative aldehyde dehydrogenase DhaS (495 aa).

244–249 (GSTEIG) provides a ligand contact to NAD(+). Active-site residues include glutamate 266 and cysteine 300.

The protein belongs to the aldehyde dehydrogenase family.

The catalysed reaction is an aldehyde + NAD(+) + H2O = a carboxylate + NADH + 2 H(+). The sequence is that of Putative aldehyde dehydrogenase DhaS (dhaS) from Bacillus subtilis (strain 168).